Consider the following 274-residue polypeptide: Diaminopimelate epimerase (274 aa).

Substrate is bound by residues Asn-11, Gln-44, and Asn-64. The active-site Proton donor is the Cys-73. Residues 74 to 75 (GN), Asn-157, Asn-190, and 208 to 209 (ER) contribute to the substrate site. Residue Cys-217 is the Proton acceptor of the active site. A substrate-binding site is contributed by 218–219 (GS).

This sequence belongs to the diaminopimelate epimerase family. In terms of assembly, homodimer.

Its subcellular location is the cytoplasm. The catalysed reaction is (2S,6S)-2,6-diaminopimelate = meso-2,6-diaminopimelate. Its pathway is amino-acid biosynthesis; L-lysine biosynthesis via DAP pathway; DL-2,6-diaminopimelate from LL-2,6-diaminopimelate: step 1/1. In terms of biological role, catalyzes the stereoinversion of LL-2,6-diaminopimelate (L,L-DAP) to meso-diaminopimelate (meso-DAP), a precursor of L-lysine and an essential component of the bacterial peptidoglycan. This is Diaminopimelate epimerase from Shigella boydii serotype 18 (strain CDC 3083-94 / BS512).